Consider the following 187-residue polypeptide: UPF0301 protein PC1_3712 (187 aa).

It belongs to the UPF0301 (AlgH) family.

In Pectobacterium carotovorum subsp. carotovorum (strain PC1), this protein is UPF0301 protein PC1_3712.